A 186-amino-acid polypeptide reads, in one-letter code: ADP-ribosylation factor-like protein 8B (186 aa).

Positions M1–E19 form an intramembrane region, note=Mediates targeting to membranes. Residues Q29 to T35, D71 to Q75, and N130 to D133 contribute to the GTP site. A Glycyl lysine isopeptide (Lys-Gly) (interchain with G-Cter in ubiquitin) cross-link involves residue K141.

Belongs to the small GTPase superfamily. Arf family. Interacts with tubulin. Interacts with BORCS5; recruits ARL8B to lysosomes. Interacts with VPS41; the interaction mediates the recruitment of the HOPS complex to lysosomes. Interacts (GTP-bound form) with PLEKHM2 (via RUN domain); the interaction is required to recruit the motor protein kinesin-1 on lysosomes. Interacts (GTP-bound form) with PLEKHM1 (via RUN domain); the interaction is required for PLEKHM1 localization to lysosomes and for ARL8B function in delivery and degradation of endocytic and autophagic cargo in lysosomes. PLEKHM1 and PLEKHM2 compete for interaction with ARL8B. Interacts (GTP-bound form) with RUFY1; the interaction is required for RUFY1 endosomal location. When GTP-bound, interacts with RUFY3 and RUFY4, but not with RUFY1, nor RUFY2. Post-translationally, ubiquitinated at Lys-141 by RNF167, leading to its degradation.

It is found in the late endosome membrane. The protein localises to the lysosome membrane. It localises to the cytoplasm. The protein resides in the cytoskeleton. Its subcellular location is the spindle. It is found in the cell projection. The protein localises to the axon. It localises to the synapse. The protein resides in the cytolytic granule membrane. Its subcellular location is the early endosome membrane. It catalyses the reaction GTP + H2O = GDP + phosphate + H(+). Its function is as follows. Small GTPase which cycles between active GTP-bound and inactive GDP-bound states. In its active state, binds to a variety of effector proteins playing a key role in the regulation of lysosomal positioning which is important for nutrient sensing, natural killer cell-mediated cytotoxicity and antigen presentation. Along with its effectors, orchestrates lysosomal transport and fusion. Localizes specifically to lysosomal membranes and mediates anterograde lysosomal motility by recruiting PLEKHM2, which in turn recruits the motor protein kinesin-1 on lysosomes. Required for lysosomal and cytolytic granule exocytosis. Critical factor involved in NK cell-mediated cytotoxicity. Drives the polarization of cytolytic granules and microtubule-organizing centers (MTOCs) toward the immune synapse between effector NK lymphocytes and target cells. In neurons, mediates the anterograde axonal long-range transport of presynaptic lysosome-related vesicles required for presynaptic biogenesis and synaptic function. Also acts as a regulator of endosome to lysosome trafficking pathways of special significance for host defense. Recruits RUFY1 onto early endosomes regulating endosomes to trans-Golgi network proteins retrieval. Regulates cargo trafficking to lysosomes by binding to PLEKHM1 and recruiting the HOPS subunit VPS41, resulting in functional assembly of the HOPS complex on lysosomal membranes. Plays an important role in cargo delivery to lysosomes for antigen presentation and microbial killing. Directs the intersection of CD1d with lipid antigens in lysosomes, and plays a role in intersecting phagosomes with lysosomes to generate phagolysosomes that kill microbes. Involved in the process of MHC II presentation. Regulates the delivery of antigens to lysosomes and the formation of MHC II-peptide complexes through the recruitment of the HOPS complex to lysosomes allowing the fusion of late endosomes to lysosomes. May play a role in chromosome segregation. The polypeptide is ADP-ribosylation factor-like protein 8B (ARL8B) (Pongo abelii (Sumatran orangutan)).